We begin with the raw amino-acid sequence, 186 residues long: HTH-type transcriptional regulator Hpr (186 aa).

The region spanning 13-157 is the HTH marR-type domain; it reads AMLYSQRIAQ…VMAVIRNIYG (145 aa). Residues 63–86 constitute a DNA-binding region (H-T-H motif); sequence ISDVAKFGVMHVSTAFNFSKKLEE.

In terms of assembly, homodimer.

Negative regulator of protease production and sporulation. The chain is HTH-type transcriptional regulator Hpr from Lysinibacillus sphaericus (strain C3-41).